The primary structure comprises 445 residues: Beclin-1 (445 aa).

The BH3 motif lies at 103-122; it reads TMENLSRRLKVTGDLFDIMS. A coiled-coil region spans residues 137 to 264; the sequence is DTLLDQLDTQ…QLDKLKKTNV (128 aa). An evolutionary conserved domain (ECD) region spans residues 240 to 445; it reads DDLKSVENQM…AWVSSQFYNK (206 aa). The required for membrane-association stretch occupies residues 420 to 445; that stretch reads WTKALKFMLTNLKWGLAWVSSQFYNK.

It belongs to the beclin family. As to quaternary structure, component of the PI3K (PI3KC3/PI3K-III/class III phosphatidylinositol 3-kinase) complex. Post-translationally, may be proteolytically processed by caspases; the C-terminal fragment(s) may induce apoptosis.

It localises to the cytoplasm. It is found in the golgi apparatus. The protein localises to the trans-Golgi network membrane. Its subcellular location is the endosome membrane. The protein resides in the endoplasmic reticulum membrane. It localises to the mitochondrion membrane. It is found in the cytoplasmic vesicle. The protein localises to the autophagosome. Plays a central role in autophagy. Acts as core subunit of different PI3K complex forms that mediate formation of phosphatidylinositol 3-phosphate and are believed to play a role in multiple membrane trafficking pathways: PI3KC3-C1 is involved in initiation of autophagosomes and PI3KC3-C2 in maturation of autophagosomes and endocytosis. Involved in regulation of degradative endocytic trafficking and required for the abscission step in cytokinesis, probably in the context of PI3KC3-C2. Essential for the formation of PI3KC3-C2 but not PI3KC3-C1 PI3K complex forms. Involved in endocytosis including endosome formation in neuronal cells. The polypeptide is Beclin-1 (becn1) (Xenopus laevis (African clawed frog)).